A 491-amino-acid polypeptide reads, in one-letter code: Trigger factor (491 aa).

The region spanning 169 to 254 is the PPIase FKBP-type domain; the sequence is GDRVTIDYLG…VKDVAAAAPI (86 aa). Residues 434 to 491 are disordered; it reads KVSKEELTAEDDADEKPAKKTASKKKAAAKADAAEGEEAAAPKRKAPAKKKASDESAE. Basic residues predominate over residues 452–461; it reads KKTASKKKAA.

Belongs to the FKBP-type PPIase family. Tig subfamily.

It is found in the cytoplasm. The catalysed reaction is [protein]-peptidylproline (omega=180) = [protein]-peptidylproline (omega=0). Involved in protein export. Acts as a chaperone by maintaining the newly synthesized protein in an open conformation. Functions as a peptidyl-prolyl cis-trans isomerase. This Sinorhizobium medicae (strain WSM419) (Ensifer medicae) protein is Trigger factor.